Reading from the N-terminus, the 447-residue chain is Phosphoglucosamine mutase (447 aa).

Ser100 functions as the Phosphoserine intermediate in the catalytic mechanism. Mg(2+) contacts are provided by Ser100, Asp239, Asp241, and Asp243. Ser100 carries the phosphoserine modification.

This sequence belongs to the phosphohexose mutase family. Mg(2+) serves as cofactor. In terms of processing, activated by phosphorylation.

It carries out the reaction alpha-D-glucosamine 1-phosphate = D-glucosamine 6-phosphate. Its function is as follows. Catalyzes the conversion of glucosamine-6-phosphate to glucosamine-1-phosphate. This is Phosphoglucosamine mutase from Caldanaerobacter subterraneus subsp. tengcongensis (strain DSM 15242 / JCM 11007 / NBRC 100824 / MB4) (Thermoanaerobacter tengcongensis).